A 407-amino-acid polypeptide reads, in one-letter code: Transcriptional regulator ICP22 homolog (407 aa).

Positions 34 to 268 (RKRRRKLKPQ…STQPGGVPKL (235 aa)) are disordered. Over residues 81–241 (EREGEGGEEG…EEAEEEEEEA (161 aa)) the composition is skewed to acidic residues.

It belongs to the herpesviridae ICP22 family.

This is Transcriptional regulator ICP22 homolog (73) from Saimiriine herpesvirus 2 (strain 11) (SaHV-2).